Consider the following 502-residue polypeptide: 2-isopropylmalate synthase (502 aa).

Mn(2+) contacts are provided by aspartate 1, histidine 189, histidine 191, and asparagine 225. Positions 1-254 (DGEQALQASL…STNINYKEIY (254 aa)) constitute a Pyruvate carboxyltransferase domain. Residues 379-502 (CLKFFSVQSI…VNKKLQELKK (124 aa)) form a regulatory domain region.

This sequence belongs to the alpha-IPM synthase/homocitrate synthase family. LeuA type 1 subfamily. As to quaternary structure, homodimer. It depends on Mn(2+) as a cofactor.

It localises to the cytoplasm. The catalysed reaction is 3-methyl-2-oxobutanoate + acetyl-CoA + H2O = (2S)-2-isopropylmalate + CoA + H(+). Its pathway is amino-acid biosynthesis; L-leucine biosynthesis; L-leucine from 3-methyl-2-oxobutanoate: step 1/4. Its function is as follows. Catalyzes the condensation of the acetyl group of acetyl-CoA with 3-methyl-2-oxobutanoate (2-ketoisovalerate) to form 3-carboxy-3-hydroxy-4-methylpentanoate (2-isopropylmalate). This Buchnera aphidicola subsp. Macrosiphoniella ludovicianae protein is 2-isopropylmalate synthase.